The chain runs to 394 residues: Protein TsgA homolog (394 aa).

12 helical membrane-spanning segments follow: residues 11–31, 51–71, 76–96, 101–121, 134–154, 162–182, 206–226, 246–266, 274–294, 302–322, 334–354, and 363–383; these read WISY…GMVM, FLNA…EIIP, LVFG…GHNL, ISMF…TFLI, LLFT…AAAI, WYWV…LTLC, MGVL…LGFI, QLVS…SFIL, IVTV…STNN, ILAL…LGSL, FILT…GPIV, and LATA…LGFF.

Belongs to the major facilitator superfamily. TsgA family.

Its subcellular location is the cell inner membrane. This is Protein TsgA homolog from Yersinia enterocolitica serotype O:8 / biotype 1B (strain NCTC 13174 / 8081).